The sequence spans 129 residues: L-ectoine synthase (129 aa).

This sequence belongs to the ectoine synthase family.

It carries out the reaction (2S)-4-acetamido-2-aminobutanoate = L-ectoine + H2O. It functions in the pathway amine and polyamine biosynthesis; ectoine biosynthesis; L-ectoine from L-aspartate 4-semialdehyde: step 3/3. In terms of biological role, catalyzes the circularization of gamma-N-acetyl-alpha,gamma-diaminobutyric acid (ADABA) to ectoine (1,4,5,6-tetrahydro-2-methyl-4-pyrimidine carboxylic acid), which is an excellent osmoprotectant. The sequence is that of L-ectoine synthase from Halalkalibacterium halodurans (strain ATCC BAA-125 / DSM 18197 / FERM 7344 / JCM 9153 / C-125) (Bacillus halodurans).